A 361-amino-acid polypeptide reads, in one-letter code: Probable lipid desaturase ADS3.2, chloroplastic (361 aa).

A chloroplast-targeting transit peptide spans 1–57 (MMSLSTTLKPLSHFSPFVKRHNPKTNNTLFTLDTHNFTNSFWSKRGGSVSHRKHTVV). The next 2 membrane-spanning stretches (helical) occupy residues 99 to 118 (LVIF…YFSW) and 122 to 139 (WVFP…TLSY). A Histidine box-1 motif is present at residues 140-145 (HRNLSH). The Histidine box-2 motif lies at 177–181 (HRYHH). The chain crosses the membrane as a helical span at residues 246 to 266 (FLFYFCGGMPLLVWGIGITIA). Residues 309 to 313 (HNNHH) carry the Histidine box-3 motif.

This sequence belongs to the fatty acid desaturase type 1 family. It depends on Fe(2+) as a cofactor.

It is found in the plastid. The protein resides in the chloroplast membrane. It participates in lipid metabolism; polyunsaturated fatty acid biosynthesis. In Arabidopsis thaliana (Mouse-ear cress), this protein is Probable lipid desaturase ADS3.2, chloroplastic.